The chain runs to 105 residues: Nucleoid-associated protein ABO_1774 (105 aa).

A disordered region spans residues 85–105 (QQQDSMQNMAGGFPFPPGFKP).

It belongs to the YbaB/EbfC family. Homodimer.

The protein localises to the cytoplasm. It is found in the nucleoid. Binds to DNA and alters its conformation. May be involved in regulation of gene expression, nucleoid organization and DNA protection. The protein is Nucleoid-associated protein ABO_1774 of Alcanivorax borkumensis (strain ATCC 700651 / DSM 11573 / NCIMB 13689 / SK2).